A 680-amino-acid polypeptide reads, in one-letter code: DNA-directed RNA polymerase subunit beta' (680 aa).

Zn(2+) is bound by residues Cys-69, Cys-71, Cys-87, and Cys-90. Mg(2+)-binding residues include Asp-489, Asp-491, and Asp-493.

The protein belongs to the RNA polymerase beta' chain family. RpoC1 subfamily. As to quaternary structure, in plastids the minimal PEP RNA polymerase catalytic core is composed of four subunits: alpha, beta, beta', and beta''. When a (nuclear-encoded) sigma factor is associated with the core the holoenzyme is formed, which can initiate transcription. Mg(2+) is required as a cofactor. Requires Zn(2+) as cofactor.

Its subcellular location is the plastid. It is found in the chloroplast. The catalysed reaction is RNA(n) + a ribonucleoside 5'-triphosphate = RNA(n+1) + diphosphate. In terms of biological role, DNA-dependent RNA polymerase catalyzes the transcription of DNA into RNA using the four ribonucleoside triphosphates as substrates. The chain is DNA-directed RNA polymerase subunit beta' from Lobularia maritima (Sweet alyssum).